The sequence spans 153 residues: ORM1-like protein 1 (153 aa).

Residues 1 to 26 lie on the Cytoplasmic side of the membrane; it reads MNVGVAHSEVNPNTRVMNSRGMWLTY. The next 2 membrane-spanning stretches (helical) occupy residues 27–46 and 47–67; these read ALGV…FSVP and VAWT…LHAV. Over 68 to 100 the chain is Cytoplasmic; the sequence is KGTPFETPDQGKARLLTHWEQLDYGVQFTSSRK. A helical transmembrane segment spans residues 101–121; the sequence is FLTISPIILYFLASFYTKYDP. At 122 to 123 the chain is on the extracellular side; the sequence is TH. A helical transmembrane segment spans residues 124 to 144; sequence FFINTASLLSVLIPKLPQLHG. At 145–153 the chain is on the cytoplasmic side; that stretch reads VRIFGINKY.

The protein belongs to the ORM family. In terms of assembly, ceramide-sensitive subunit of the serine palmitoyltransferase (SPT) complex, which is also composed of SPTLC1, SPTLC2/3 and SPTSSA/B.

The protein resides in the endoplasmic reticulum membrane. Functionally, plays an essential role in the homeostatic regulation of sphingolipid de novo biosynthesis by modulating the activity of the serine palmitoyltransferase (SPT) in response to ceramide levels. When complexed to SPT, the binding of ceramides to its N-terminus stabilizes a conformation that block SPT substrate entry, hence preventing SPT catalytic activity. Through this mechanism, maintains ceramide levels at sufficient concentrations for the production of complex sphingolipids, but which prevents the accumulation of ceramides to levels that trigger apoptosis. This Xenopus laevis (African clawed frog) protein is ORM1-like protein 1 (ormdl1).